We begin with the raw amino-acid sequence, 167 residues long: Leptin (167 aa).

The first 21 residues, 1–21 (MYWRTLWGFLWLWPYLFYIQA), serve as a signal peptide directing secretion. Cys117 and Cys167 are joined by a disulfide.

It belongs to the leptin family.

Its subcellular location is the secreted. Functionally, key player in the regulation of energy balance and body weight control. Once released into the circulation, has central and peripheral effects by binding LEPR, found in many tissues, which results in the activation of several major signaling pathways. In the hypothalamus, acts as an appetite-regulating factor that induces a decrease in food intake and an increase in energy consumption by inducing anorexinogenic factors and suppressing orexigenic neuropeptides, also regulates bone mass and secretion of hypothalamo-pituitary-adrenal hormones. In the periphery, increases basal metabolism, influences reproductive function, regulates pancreatic beta-cell function and insulin secretion, is pro-angiogenic for endothelial cell and affects innate and adaptive immunity. In the arcuate nucleus of the hypothalamus, activates by depolarization POMC neurons inducing FOS and SOCS3 expression to release anorexigenic peptides and inhibits by hyperpolarization NPY neurons inducing SOCS3 with a consequent reduction on release of orexigenic peptides. In addition to its known satiety inducing effect, has a modulatory role in nutrient absorption. In the intestine, reduces glucose absorption by enterocytes by activating PKC and leading to a sequential activation of p38, PI3K and ERK signaling pathways which exerts an inhibitory effect on glucose absorption. Acts as a growth factor on certain tissues, through the activation of different signaling pathways increases expression of genes involved in cell cycle regulation such as CCND1, via JAK2-STAT3 pathway, or VEGFA, via MAPK1/3 and PI3K-AKT1 pathways. May also play an apoptotic role via JAK2-STAT3 pathway and up-regulation of BIRC5 expression. Pro-angiogenic, has mitogenic activity on vascular endothelial cells and plays a role in matrix remodeling by regulating the expression of matrix metalloproteinases (MMPs) and tissue inhibitors of metalloproteinases (TIMPs). In innate immunity, modulates the activity and function of neutrophils by increasing chemotaxis and the secretion of oxygen radicals. Increases phagocytosis by macrophages and enhances secretion of pro-inflammatory mediators. Increases cytotoxic ability of NK cells. Plays a pro-inflammatory role, in synergy with IL1B, by inducing NOS2 which promotes the production of IL6, IL8 and Prostaglandin E2, through a signaling pathway that involves JAK2, PI3K, MAP2K1/MEK1 and MAPK14/p38. In adaptive immunity, promotes the switch of memory T-cells towards T helper-1 cell immune responses. Increases CD4(+)CD25(-) T-cell proliferation and reduces autophagy during TCR (T-cell receptor) stimulation, through MTOR signaling pathway activation and BCL2 up-regulation. The polypeptide is Leptin (LEP) (Macaca mulatta (Rhesus macaque)).